The chain runs to 193 residues: MQLLEERILTDGNILGENILKVDNFLTHQVDYRLMKAIGKVFAQKYAEAGITKVVTIEASGIAPAVYAAEAMDVPMIFAKKHKNITMTEGILTAEVYSFTKQVTSTVSIAGKFLSKEDKVLIIDDFLANGQAAKGLIEIIGQAGAQVVGVGIVIEKSFQDGRRLIEDMGIEVTSLARIKNFENGNLNFLEADA.

2 residues coordinate xanthine: leucine 20 and threonine 27. Alanine 128–alanine 132 contacts 5-phospho-alpha-D-ribose 1-diphosphate. Residue lysine 156 participates in xanthine binding.

The protein belongs to the purine/pyrimidine phosphoribosyltransferase family. Xpt subfamily. In terms of assembly, homodimer.

The protein resides in the cytoplasm. It catalyses the reaction XMP + diphosphate = xanthine + 5-phospho-alpha-D-ribose 1-diphosphate. The protein operates within purine metabolism; XMP biosynthesis via salvage pathway; XMP from xanthine: step 1/1. Its function is as follows. Converts the preformed base xanthine, a product of nucleic acid breakdown, to xanthosine 5'-monophosphate (XMP), so it can be reused for RNA or DNA synthesis. This is Xanthine phosphoribosyltransferase from Streptococcus pyogenes serotype M3 (strain ATCC BAA-595 / MGAS315).